A 257-amino-acid polypeptide reads, in one-letter code: MEFQYRGNKTVLSNCYQNPPLRASRPLYINPANRSEATVYLVETSGGIVEGDHNVFDIDIKEGADVCLIPQSATKIYPSYNGIWSSQDMDITIGPKASLSFKTEAVIPFEQARFNSKTVIQMTSDSTFLWGDILSPGRVARGEVFEYTDVRTNFQVWMDDECLIYDPLLISKDNMGLKKMGMLEDHLFIGSMWFVTPTIEEFDIRELNERLQESPHSKASASMLEGKAVNVRWLASDLVDLKKEMNRIWDEFANYIV.

It belongs to the UreD family. As to quaternary structure, ureD, UreF and UreG form a complex that acts as a GTP-hydrolysis-dependent molecular chaperone, activating the urease apoprotein by helping to assemble the nickel containing metallocenter of UreC. The UreE protein probably delivers the nickel.

The protein resides in the cytoplasm. Required for maturation of urease via the functional incorporation of the urease nickel metallocenter. The polypeptide is Urease accessory protein UreD (Sporosarcina pasteurii (Bacillus pasteurii)).